We begin with the raw amino-acid sequence, 219 residues long: Small ribosomal subunit protein uS3 (219 aa).

The 69-residue stretch at I38–K106 folds into the KH type-2 domain.

It belongs to the universal ribosomal protein uS3 family. Part of the 30S ribosomal subunit. Forms a tight complex with proteins S10 and S14.

Its function is as follows. Binds the lower part of the 30S subunit head. Binds mRNA in the 70S ribosome, positioning it for translation. This chain is Small ribosomal subunit protein uS3, found in Levilactobacillus brevis (strain ATCC 367 / BCRC 12310 / CIP 105137 / JCM 1170 / LMG 11437 / NCIMB 947 / NCTC 947) (Lactobacillus brevis).